We begin with the raw amino-acid sequence, 430 residues long: Phosphomethylpyrimidine synthase (430 aa).

Residues asparagine 67, methionine 96, tyrosine 125, histidine 161, 183–185, 224–227, and glutamate 263 each bind substrate; these read SRG and DALR. Residue histidine 267 participates in Zn(2+) binding. A substrate-binding site is contributed by tyrosine 290. A Zn(2+)-binding site is contributed by histidine 331. [4Fe-4S] cluster is bound by residues cysteine 406, cysteine 409, and cysteine 413.

Belongs to the ThiC family. Homodimer. Requires [4Fe-4S] cluster as cofactor.

It carries out the reaction 5-amino-1-(5-phospho-beta-D-ribosyl)imidazole + S-adenosyl-L-methionine = 4-amino-2-methyl-5-(phosphooxymethyl)pyrimidine + CO + 5'-deoxyadenosine + formate + L-methionine + 3 H(+). Its pathway is cofactor biosynthesis; thiamine diphosphate biosynthesis. Its function is as follows. Catalyzes the synthesis of the hydroxymethylpyrimidine phosphate (HMP-P) moiety of thiamine from aminoimidazole ribotide (AIR) in a radical S-adenosyl-L-methionine (SAM)-dependent reaction. In Campylobacter jejuni subsp. jejuni serotype O:2 (strain ATCC 700819 / NCTC 11168), this protein is Phosphomethylpyrimidine synthase.